A 354-amino-acid polypeptide reads, in one-letter code: Uroporphyrinogen decarboxylase (354 aa).

Substrate-binding positions include 27 to 31 (RQAGR), D77, Y154, T209, and H327.

This sequence belongs to the uroporphyrinogen decarboxylase family. In terms of assembly, homodimer.

The protein resides in the cytoplasm. It carries out the reaction uroporphyrinogen III + 4 H(+) = coproporphyrinogen III + 4 CO2. The protein operates within porphyrin-containing compound metabolism; protoporphyrin-IX biosynthesis; coproporphyrinogen-III from 5-aminolevulinate: step 4/4. Its function is as follows. Catalyzes the decarboxylation of four acetate groups of uroporphyrinogen-III to yield coproporphyrinogen-III. In Shigella dysenteriae serotype 1 (strain Sd197), this protein is Uroporphyrinogen decarboxylase.